A 470-amino-acid polypeptide reads, in one-letter code: ATP synthase subunit beta (470 aa).

156-163 (GGAGVGKT) provides a ligand contact to ATP.

This sequence belongs to the ATPase alpha/beta chains family. In terms of assembly, F-type ATPases have 2 components, CF(1) - the catalytic core - and CF(0) - the membrane proton channel. CF(1) has five subunits: alpha(3), beta(3), gamma(1), delta(1), epsilon(1). CF(0) has three main subunits: a(1), b(2) and c(9-12). The alpha and beta chains form an alternating ring which encloses part of the gamma chain. CF(1) is attached to CF(0) by a central stalk formed by the gamma and epsilon chains, while a peripheral stalk is formed by the delta and b chains.

It is found in the cell inner membrane. The enzyme catalyses ATP + H2O + 4 H(+)(in) = ADP + phosphate + 5 H(+)(out). Its function is as follows. Produces ATP from ADP in the presence of a proton gradient across the membrane. The catalytic sites are hosted primarily by the beta subunits. The polypeptide is ATP synthase subunit beta (Thermosipho africanus (strain TCF52B)).